The chain runs to 442 residues: Terpene cyclase aneC (442 aa).

Positions 196, 327, 331, and 335 each coordinate Mg(2+). (2E,6E)-farnesyl diphosphate-binding residues include Arg-419 and Tyr-420.

Belongs to the terpene synthase family. As to quaternary structure, homodimer. Mg(2+) serves as cofactor.

The enzyme catalyses (2E,6E)-farnesyl diphosphate = dauca-4,7-diene + diphosphate. It functions in the pathway secondary metabolite biosynthesis. In terms of biological role, terpene cyclase; part of the gene cluster that mediates the biosynthesis of aculenes, a unique type of norsesquiterpenes that contain a nordaucane skeleton linked to an L-proline moiety and are of mixed biosynthetic origin. The pathway begins with the synthesis of dauca-4,7-diene by the terpene cyclase aneC using farnesyl pyrophosphate (FPP) as substrate. The cytochrome P450 monooxygenase aneF then performs the initial oxidation at C-12 of dauca-4,7-diene to yield asperaculane D. Asperaculane D is substrate of the cytochrome P450 monooxygenase aneD for C-10 hydroxylation to yield asperaculane E. The cytochrome P450 monooxygenase aneG then converts asperaculane E into aculene D via C-2 oxidation. The monomodular nonribosomal peptide synthtase aneB adenylates L-proline and the thiohydrolase aneE transfers this activated L-proline derivative to aculenes D and C to produce respectively aculenes B and A. The dioxygenase aneA converts aculene D into aculene C, and aculene B into aculene A by introducing the 5,6-alkene moiety. Asperculanes A, B, C and F, as well as 14-prolyl asperculane C, might be shunt products of the pathway. The polypeptide is Terpene cyclase aneC (Aspergillus aculeatus (strain ATCC 16872 / CBS 172.66 / WB 5094)).